The primary structure comprises 61 residues: Chi-conotoxin MrIA (61 aa).

Residues Met1–Gly19 form the signal peptide. Positions Val20–Arg48 are excised as a propeptide. 2 disulfides stabilise this stretch: Cys52-Cys61 and Cys53-Cys58. Pro60 carries the 4-hydroxyproline modification.

It belongs to the conotoxin T superfamily. As to expression, expressed by the venom duct.

It is found in the secreted. Its function is as follows. Chi-conotoxins inhibit the neuronal noradrenaline transporter (NET/SLC6A2). Activity has been described on both human (inhibition of norepinephrine uptake is IC(50)=1.26 uM) and rat (pIC(50)=6.21 corresponding IC(50)=0.16 uM) transporters. Acts as a reversible non-competitive inhibitor. This chain is Chi-conotoxin MrIA, found in Conus marmoreus (Marble cone).